A 221-amino-acid chain; its full sequence is Pyridoxine/pyridoxamine 5'-phosphate oxidase (221 aa).

Substrate is bound by residues 14–17 (RNEY) and Lys-73. Residues 68-73 (RTVLLK), 83-84 (FT), Lys-90, and Gln-112 each bind FMN. The substrate site is built by Tyr-130, Arg-134, and Ser-138. FMN is bound by residues 147 to 148 (QS) and Trp-193. 199–201 (RLH) is a binding site for substrate. Arg-203 lines the FMN pocket.

Belongs to the pyridoxamine 5'-phosphate oxidase family. Homodimer. FMN serves as cofactor.

It carries out the reaction pyridoxamine 5'-phosphate + O2 + H2O = pyridoxal 5'-phosphate + H2O2 + NH4(+). The catalysed reaction is pyridoxine 5'-phosphate + O2 = pyridoxal 5'-phosphate + H2O2. The protein operates within cofactor metabolism; pyridoxal 5'-phosphate salvage; pyridoxal 5'-phosphate from pyridoxamine 5'-phosphate: step 1/1. It functions in the pathway cofactor metabolism; pyridoxal 5'-phosphate salvage; pyridoxal 5'-phosphate from pyridoxine 5'-phosphate: step 1/1. Catalyzes the oxidation of either pyridoxine 5'-phosphate (PNP) or pyridoxamine 5'-phosphate (PMP) into pyridoxal 5'-phosphate (PLP). The sequence is that of Pyridoxine/pyridoxamine 5'-phosphate oxidase from Salinispora arenicola (strain CNS-205).